The chain runs to 463 residues: Asparagine--tRNA ligase (463 aa).

This sequence belongs to the class-II aminoacyl-tRNA synthetase family. Homodimer.

The protein localises to the cytoplasm. The enzyme catalyses tRNA(Asn) + L-asparagine + ATP = L-asparaginyl-tRNA(Asn) + AMP + diphosphate + H(+). This is Asparagine--tRNA ligase from Clostridium novyi (strain NT).